Reading from the N-terminus, the 257-residue chain is 1-(5-phosphoribosyl)-5-[(5-phosphoribosylamino)methylideneamino] imidazole-4-carboxamide isomerase (257 aa).

The Proton acceptor role is filled by aspartate 8. Residue aspartate 129 is the Proton donor of the active site.

The protein belongs to the HisA/HisF family.

Its subcellular location is the cytoplasm. The enzyme catalyses 1-(5-phospho-beta-D-ribosyl)-5-[(5-phospho-beta-D-ribosylamino)methylideneamino]imidazole-4-carboxamide = 5-[(5-phospho-1-deoxy-D-ribulos-1-ylimino)methylamino]-1-(5-phospho-beta-D-ribosyl)imidazole-4-carboxamide. Its pathway is amino-acid biosynthesis; L-histidine biosynthesis; L-histidine from 5-phospho-alpha-D-ribose 1-diphosphate: step 4/9. This chain is 1-(5-phosphoribosyl)-5-[(5-phosphoribosylamino)methylideneamino] imidazole-4-carboxamide isomerase, found in Trichormus variabilis (strain ATCC 29413 / PCC 7937) (Anabaena variabilis).